Consider the following 341-residue polypeptide: S-adenosylmethionine:tRNA ribosyltransferase-isomerase (341 aa).

This sequence belongs to the QueA family. In terms of assembly, monomer.

The protein resides in the cytoplasm. The catalysed reaction is 7-aminomethyl-7-carbaguanosine(34) in tRNA + S-adenosyl-L-methionine = epoxyqueuosine(34) in tRNA + adenine + L-methionine + 2 H(+). It participates in tRNA modification; tRNA-queuosine biosynthesis. Its function is as follows. Transfers and isomerizes the ribose moiety from AdoMet to the 7-aminomethyl group of 7-deazaguanine (preQ1-tRNA) to give epoxyqueuosine (oQ-tRNA). The protein is S-adenosylmethionine:tRNA ribosyltransferase-isomerase of Staphylococcus epidermidis (strain ATCC 12228 / FDA PCI 1200).